We begin with the raw amino-acid sequence, 160 residues long: Small ribosomal subunit protein uS7 (160 aa).

Belongs to the universal ribosomal protein uS7 family. In terms of assembly, part of the 30S ribosomal subunit. Contacts proteins S9 and S11.

One of the primary rRNA binding proteins, it binds directly to 16S rRNA where it nucleates assembly of the head domain of the 30S subunit. Is located at the subunit interface close to the decoding center, probably blocks exit of the E-site tRNA. This is Small ribosomal subunit protein uS7 from Ehrlichia chaffeensis (strain ATCC CRL-10679 / Arkansas).